We begin with the raw amino-acid sequence, 410 residues long: Arginine biosynthesis bifunctional protein ArgJ (410 aa).

Substrate is bound by residues threonine 158, lysine 184, threonine 195, glutamate 282, asparagine 405, and threonine 410. Residue threonine 195 is the Nucleophile of the active site.

This sequence belongs to the ArgJ family. In terms of assembly, heterotetramer of two alpha and two beta chains.

Its subcellular location is the cytoplasm. It carries out the reaction N(2)-acetyl-L-ornithine + L-glutamate = N-acetyl-L-glutamate + L-ornithine. It catalyses the reaction L-glutamate + acetyl-CoA = N-acetyl-L-glutamate + CoA + H(+). It functions in the pathway amino-acid biosynthesis; L-arginine biosynthesis; L-ornithine and N-acetyl-L-glutamate from L-glutamate and N(2)-acetyl-L-ornithine (cyclic): step 1/1. The protein operates within amino-acid biosynthesis; L-arginine biosynthesis; N(2)-acetyl-L-ornithine from L-glutamate: step 1/4. Its function is as follows. Catalyzes two activities which are involved in the cyclic version of arginine biosynthesis: the synthesis of N-acetylglutamate from glutamate and acetyl-CoA as the acetyl donor, and of ornithine by transacetylation between N(2)-acetylornithine and glutamate. The chain is Arginine biosynthesis bifunctional protein ArgJ from Rhodopirellula baltica (strain DSM 10527 / NCIMB 13988 / SH1).